Consider the following 243-residue polypeptide: ATP synthase subunit a (243 aa).

8 consecutive transmembrane segments (helical) span residues 28-48 (SSLYMVLTVVFASLFLFAGVF), 52-72 (VIPGPMQSFVEIVCSFVLGII), 83-103 (YFPLILSVFLYVLFANLVGML), 114-134 (HIVVTLALAMVVFIFVTLIGL), 141-161 (FFAMFLPDGTPNWIAPLMIFL), 177-197 (LTANMIAGHTILKVIAGFVYP), 200-220 (LLISPLSFLFVVVLIVFEVFI), and 221-241 (AMLQAYIFVMLTCVYLNDSLF).

Belongs to the ATPase A chain family. As to quaternary structure, F-type ATPases have 2 components, CF(1) - the catalytic core - and CF(0) - the membrane proton channel. CF(1) has five subunits: alpha(3), beta(3), gamma(1), delta(1), epsilon(1). CF(0) has three main subunits: a(1), b(2) and c(9-12). The alpha and beta chains form an alternating ring which encloses part of the gamma chain. CF(1) is attached to CF(0) by a central stalk formed by the gamma and epsilon chains, while a peripheral stalk is formed by the delta and b chains.

It localises to the cell inner membrane. Key component of the proton channel; it plays a direct role in the translocation of protons across the membrane. This Neorickettsia sennetsu (strain ATCC VR-367 / Miyayama) (Ehrlichia sennetsu) protein is ATP synthase subunit a.